We begin with the raw amino-acid sequence, 250 residues long: Triosephosphate isomerase (250 aa).

9-11 (NWK) is a binding site for substrate. The active-site Electrophile is the H100. Catalysis depends on E169, which acts as the Proton acceptor. Residues G175, S208, and 229 to 230 (GG) each bind substrate.

It belongs to the triosephosphate isomerase family. As to quaternary structure, homodimer.

The protein localises to the cytoplasm. It carries out the reaction D-glyceraldehyde 3-phosphate = dihydroxyacetone phosphate. Its pathway is carbohydrate biosynthesis; gluconeogenesis. It functions in the pathway carbohydrate degradation; glycolysis; D-glyceraldehyde 3-phosphate from glycerone phosphate: step 1/1. Functionally, involved in the gluconeogenesis. Catalyzes stereospecifically the conversion of dihydroxyacetone phosphate (DHAP) to D-glyceraldehyde-3-phosphate (G3P). The sequence is that of Triosephosphate isomerase from Synechococcus sp. (strain JA-2-3B'a(2-13)) (Cyanobacteria bacterium Yellowstone B-Prime).